The following is a 512-amino-acid chain: Eukaryotic translation initiation factor 3 subunit L (512 aa).

One can recognise a PCI domain in the interval 291–477 (DAFRLFESIL…GERQFTDSVD (187 aa)).

The protein belongs to the eIF-3 subunit L family. In terms of assembly, component of the eukaryotic translation initiation factor 3 (eIF-3) complex.

It localises to the cytoplasm. Its function is as follows. Component of the eukaryotic translation initiation factor 3 (eIF-3) complex, which is involved in protein synthesis of a specialized repertoire of mRNAs and, together with other initiation factors, stimulates binding of mRNA and methionyl-tRNAi to the 40S ribosome. The eIF-3 complex specifically targets and initiates translation of a subset of mRNAs involved in cell proliferation. This is Eukaryotic translation initiation factor 3 subunit L from Monosiga brevicollis (Choanoflagellate).